The following is a 447-amino-acid chain: Probable ribosomal RNA small subunit methyltransferase B (447 aa).

S-adenosyl-L-methionine contacts are provided by residues 259 to 265, Asp-283, Asp-310, and Asp-329; that span reads CAAPGGK. Catalysis depends on Cys-382, which acts as the Nucleophile.

It belongs to the class I-like SAM-binding methyltransferase superfamily. RsmB/NOP family.

It is found in the cytoplasm. The catalysed reaction is cytidine(967) in 16S rRNA + S-adenosyl-L-methionine = 5-methylcytidine(967) in 16S rRNA + S-adenosyl-L-homocysteine + H(+). Specifically methylates the cytosine at position 967 (m5C967) of 16S rRNA. The sequence is that of Probable ribosomal RNA small subunit methyltransferase B from Bacillus subtilis (strain 168).